Reading from the N-terminus, the 391-residue chain is MSKRRVVVGMSGGVDSSVTAWLLKEQGYDVVGLFMKNWEDDDDGEYCSTRQDWIDVVSVADLIGIDVEAVNFAAEYKDRVFAEFLREYSAGRTPNPDVLCNAEIKFKAFLDHAMSLDAEMIATGHYARVRERDGRFELLKAFDHTKDQSYFLHRLNQAQLSKTMFPLGEIPKTKVREIAAQIGLPNAKKKDSTGICFIGERPFRDFLNRYLPTKPGPMKTPDGKVVGEHIGLAFYTFGQRKGIGLGGSKDGNGDPWFVAAKDIASNTLYVVQGHDHPWLLSRELVAGNVSWVAGEPPADGFACGAKTRYRQADAACVFGGAATGAAAAGPAGEARFSLAFDDAQWAVTPGQSAVLYDGEICLGGGIIESAATGQPGQATSAGHAPALAEAR.

ATP-binding positions include 9 to 16 and Met35; that span reads GMSGGVDS. The segment at 95–97 is interaction with target base in tRNA; the sequence is NPD. Cys100 functions as the Nucleophile in the catalytic mechanism. A disulfide bridge links Cys100 with Cys196. Gly124 lines the ATP pocket. The segment at 146-148 is interaction with tRNA; it reads KDQ. Residue Cys196 is the Cysteine persulfide intermediate of the active site. The segment at 308-309 is interaction with tRNA; the sequence is RY.

This sequence belongs to the MnmA/TRMU family.

The protein resides in the cytoplasm. It carries out the reaction S-sulfanyl-L-cysteinyl-[protein] + uridine(34) in tRNA + AH2 + ATP = 2-thiouridine(34) in tRNA + L-cysteinyl-[protein] + A + AMP + diphosphate + H(+). Catalyzes the 2-thiolation of uridine at the wobble position (U34) of tRNA, leading to the formation of s(2)U34. This chain is tRNA-specific 2-thiouridylase MnmA, found in Burkholderia orbicola (strain MC0-3).